The primary structure comprises 709 residues: ATP-binding cassette sub-family F member 3 (709 aa).

N-acetylalanine is present on A2. S83 is subject to Phosphoserine. The span at 129–143 shows a compositional bias: basic and acidic residues; that stretch reads RLKAKQEKRSEKDTL. The segment at 129–171 is disordered; it reads RLKAKQEKRSEKDTLKTSNPLVLEEASASQAGSRKESRLESSG. Phosphoserine occurs at positions 155, 157, and 161. Residues 161-171 show a composition bias toward basic and acidic residues; it reads SRKESRLESSG. ABC transporter domains lie at 178–424 and 492–707; these read VRIE…LNQQ and LQLD…RREG. 210–217 lines the ATP pocket; it reads GRNGLGKT. Residue S283 is modified to Phosphoserine. ATP is bound at residue 525 to 532; that stretch reads GENGAGKS.

Belongs to the ABC transporter superfamily. ABCF family. EF3 subfamily.

Functionally, displays an antiviral effect against flaviviruses such as west Nile virus (WNV) in the presence of OAS1B. The sequence is that of ATP-binding cassette sub-family F member 3 (ABCF3) from Homo sapiens (Human).